We begin with the raw amino-acid sequence, 221 residues long: Retinitis pigmentosa 9 protein (221 aa).

Composition is skewed to basic and acidic residues over residues 1 to 10 (MSSRPGREDV), 17 to 29 (RPRE…LQRR), and 60 to 69 (IKEDETKPED). The disordered stretch occupies residues 1-76 (MSSRPGREDV…PEDCIPDVPG (76 aa)). Residues 1–155 (MSSRPGREDV…RDNKRHEKDV (155 aa)) form a PIM1-binding region. A CCHC-type zinc finger spans residues 104-122 (QCWRCKRYGHRTGDKECPF). Lys129 is covalently cross-linked (Glycyl lysine isopeptide (Lys-Gly) (interchain with G-Cter in SUMO2)). Residues 147-156 (DNKRHEKDVR) are compositionally biased toward basic and acidic residues. The disordered stretch occupies residues 147 to 221 (DNKRHEKDVR…SKSNEGSDSE (75 aa)). Basic residues predominate over residues 184-212 (KHKKKKKKEKHKKRKKEKKKKKKRKHKSS). A phosphoserine; by PIM1 mark is found at Ser212 and Ser214.

As to quaternary structure, binds to PIM1. Binds to ZNHIT4. In terms of tissue distribution, appears to be expressed in a wide range of tissues.

The protein resides in the nucleus. Functionally, is thought to be a target protein for the PIM1 kinase. May play some roles in B-cell proliferation in association with PIM1. The polypeptide is Retinitis pigmentosa 9 protein (RP9) (Homo sapiens (Human)).